Here is a 224-residue protein sequence, read N- to C-terminus: Germin-like protein 8-5 (224 aa).

The signal sequence occupies residues 1 to 22 (MASPSSLCLLAALALISWQAMA). An intrachain disulfide couples Cys32 to Cys47. A Cupin type-1 domain is found at 62–212 (AKLDTPRKTN…AFQVEKGTID (151 aa)). Asn76 carries N-linked (GlcNAc...) asparagine glycosylation. 3 residues coordinate Mn(2+): His109, His111, and Glu116. Asn135 carries N-linked (GlcNAc...) asparagine glycosylation. Residue His157 participates in Mn(2+) binding.

Belongs to the germin family. As to quaternary structure, oligomer (believed to be a pentamer but probably hexamer).

It is found in the secreted. Its subcellular location is the extracellular space. The protein localises to the apoplast. Its function is as follows. Plays a role in broad-spectrum disease resistance. Probably has no oxalate oxidase activity even if the active site is conserved. This is Germin-like protein 8-5 from Oryza sativa subsp. japonica (Rice).